The chain runs to 158 residues: MQCPSCQNTDSRVLESRAADAGRSVRRRRECLHCDFRFTTYERVETVPITVLKRNGNRETFNRSKILNGLTLACQKTGLEQDRLESMVNELELQLQQRSGREVNSAEIGEMVLDQLSEMSEVAYVRFASVYRDFRGVNDFVAALEGIHANKEQLAAVR.

Residues 3–34 fold into a zinc finger; the sequence is CPSCQNTDSRVLESRAADAGRSVRRRRECLHC. The ATP-cone domain occupies 49 to 139; that stretch reads ITVLKRNGNR…VYRDFRGVND (91 aa).

This sequence belongs to the NrdR family. The cofactor is Zn(2+).

In terms of biological role, negatively regulates transcription of bacterial ribonucleotide reductase nrd genes and operons by binding to NrdR-boxes. The chain is Transcriptional repressor NrdR from Prochlorococcus marinus (strain MIT 9313).